The following is a 594-amino-acid chain: Invasin CotH2 (594 aa).

Residues 1–19 (MKLSLTIVSSSFLVAIAHA) form the signal peptide. N-linked (GlcNAc...) asparagine glycosylation is found at Asn-77, Asn-162, Asn-226, Asn-316, Asn-441, Asn-519, and Asn-533. The segment at 529 to 565 (PPAANGTATSTNDGGNTHTAAGESKPASSSESSGSKI) is disordered. The span at 534-547 (GTATSTNDGGNTHT) shows a compositional bias: polar residues. Over residues 548 to 565 (AAGESKPASSSESSGSKI) the composition is skewed to low complexity. Ser-571 carries GPI-anchor amidated serine lipidation. Positions 572–594 (GASRSAVSTVLLGVTALVATAIF) are cleaved as a propeptide — removed in mature form.

In terms of assembly, interacts with host epithelial cell surface HSPA5/BiP protein.

It localises to the cell membrane. Functionally, promotes invasion of host epithelial cells by adhering to receptors on the host cell surface to facilitate endocytosis of the pathogen into host cells. Binds HSPA5/BiP protein on the cell surface of host epithelial cells. In Rhizopus delemar (strain RA 99-880 / ATCC MYA-4621 / FGSC 9543 / NRRL 43880) (Mucormycosis agent), this protein is Invasin CotH2.